A 177-amino-acid polypeptide reads, in one-letter code: Large ribosomal subunit protein uL6 (177 aa).

The protein belongs to the universal ribosomal protein uL6 family. As to quaternary structure, part of the 50S ribosomal subunit.

Functionally, this protein binds to the 23S rRNA, and is important in its secondary structure. It is located near the subunit interface in the base of the L7/L12 stalk, and near the tRNA binding site of the peptidyltransferase center. The protein is Large ribosomal subunit protein uL6 of Teredinibacter turnerae (strain ATCC 39867 / T7901).